Reading from the N-terminus, the 1326-residue chain is Probable serine/threonine-protein kinase gdt8 (1326 aa).

The signal sequence occupies residues 1–22 (MINKILIKLITIIIFCFSFLFA). Residues 23-782 (EEDLIRTPPG…VDRNENLELK (760 aa)) lie on the Extracellular side of the membrane. Disordered stretches follow at residues 419-467 (VDQN…GNQG) and 731-762 (EPPT…QTPI). Composition is skewed to low complexity over residues 422–460 (NNNN…NNNN) and 731–761 (EPPT…TQTP). Residues 783-803 (IALPICLSLALLIGIIIMICI) traverse the membrane as a helical segment. Residues 804–1326 (FKKVQSNSKL…TKEDKDLDEN (523 aa)) are Cytoplasmic-facing. Residues 833–858 (IVSQPPTVIEEKPQDNSKPDDQKLIE) are disordered. Over residues 841–858 (IEEKPQDNSKPDDQKLIE) the composition is skewed to basic and acidic residues. The Protein kinase domain maps to 1036 to 1292 (IKTEQLIASY…FSEISLHLEI (257 aa)). ATP-binding positions include 1042 to 1050 (IASYLPSKV) and lysine 1065. Aspartate 1158 acts as the Proton acceptor in catalysis. The tract at residues 1301–1326 (MNESEESTSNHNTNSKTKEDKDLDEN) is disordered. Residues 1316-1326 (KTKEDKDLDEN) are compositionally biased toward basic and acidic residues.

This sequence in the N-terminal section; belongs to the GDT family. It in the C-terminal section; belongs to the protein kinase superfamily. TKL Ser/Thr protein kinase family.

Its subcellular location is the membrane. The enzyme catalyses L-seryl-[protein] + ATP = O-phospho-L-seryl-[protein] + ADP + H(+). It catalyses the reaction L-threonyl-[protein] + ATP = O-phospho-L-threonyl-[protein] + ADP + H(+). This Dictyostelium discoideum (Social amoeba) protein is Probable serine/threonine-protein kinase gdt8 (gdt8).